The following is an 874-amino-acid chain: Oxysterol-binding protein-related protein 5 (874 aa).

The segment at 1–71 (MKEEAFLRRR…PQTPGSATKV (71 aa)) is disordered. Ser12 is modified (phosphoserine). Positions 93-123 (VSKKDALKAQKENYRQEKKRATKQLFSALTD) form a coiled coil. The PH domain maps to 126–243 (VVIMADSLKI…WLDALELALR (118 aa)). Disordered stretches follow at residues 255–277 (QGRD…GLPT) and 299–338 (FSDK…GPWR). Over residues 261–277 (QGSSPDASPSSLYGLPT) the composition is skewed to polar residues. Positions 299–308 (FSDKSERENA) are enriched in basic and acidic residues. Residues 383–388 (LSRVVL), 445–448 (KPYN), and 477–478 (HH) contribute to the a 1,2-diacyl-sn-glycero-3-phospho-(1D-myo-inositol 4-phosphate) site. Residues 383-388 (LSRVVL) and Asn448 each bind a 1,2-diacyl-sn-glycero-3-phospho-L-serine. Position 503 (Ser503) interacts with a 1,2-diacyl-sn-glycero-3-phospho-L-serine. Residues 660-684 (GDQHKATQEKSVLEEAQRQRAREHQ) are compositionally biased toward basic and acidic residues. Disordered regions lie at residues 660-685 (GDQH…EHQQ) and 739-798 (GQTT…GGES). A 1,2-diacyl-sn-glycero-3-phospho-(1D-myo-inositol 4-phosphate) is bound by residues Lys669, Glu673, and Arg677. Phosphoserine is present on residues Ser746 and Ser749. Positions 754–764 (PSSDRRLRKAS) are enriched in basic and acidic residues. The segment covering 765–782 (DQPSGHSQVTESSGSTPE) has biased composition (polar residues). A helical transmembrane segment spans residues 855–873 (SWFLLCIFLTCQLFINYIL).

It belongs to the OSBP family.

The protein localises to the endoplasmic reticulum membrane. Functionally, lipid transporter involved in lipid countertransport between the endoplasmic reticulum and the plasma membrane: specifically exchanges phosphatidylserine with phosphatidylinositol 4-phosphate (PI4P), delivering phosphatidylserine to the plasma membrane in exchange for PI4P, which is degraded by the SAC1/SACM1L phosphatase in the endoplasmic reticulum. Binds phosphatidylserine and PI4P in a mutually exclusive manner. May cooperate with NPC1 to mediate the exit of cholesterol from endosomes/lysosomes. Binds 25-hydroxycholesterol and cholesterol. The protein is Oxysterol-binding protein-related protein 5 (Osbpl5) of Mus musculus (Mouse).